The chain runs to 334 residues: Ornithine carbamoyltransferase (334 aa).

Residues 57–60 (STRT), Gln-84, Arg-108, and 135–138 (HPTQ) contribute to the carbamoyl phosphate site. L-ornithine-binding positions include Asn-169, Asp-233, and 237 to 238 (SM). Carbamoyl phosphate-binding positions include 275–276 (CL) and Arg-320.

The protein belongs to the aspartate/ornithine carbamoyltransferase superfamily. OTCase family.

It is found in the cytoplasm. It carries out the reaction carbamoyl phosphate + L-ornithine = L-citrulline + phosphate + H(+). It functions in the pathway amino-acid biosynthesis; L-arginine biosynthesis; L-arginine from L-ornithine and carbamoyl phosphate: step 1/3. Functionally, reversibly catalyzes the transfer of the carbamoyl group from carbamoyl phosphate (CP) to the N(epsilon) atom of ornithine (ORN) to produce L-citrulline. In Vibrio cholerae serotype O1 (strain ATCC 39315 / El Tor Inaba N16961), this protein is Ornithine carbamoyltransferase.